The following is a 328-amino-acid chain: MELIVALGVIVFKVALVIAILLLLPLPLTWLERKIAGHMQQRMGPMRVGWHGLLQPVADGIKLLTKEDHIPAEADRFLFKLAPILALAPPFVVFAAIPFGESVSVLGNEITLYISNLNVALLFVFAVIGLEVYGVIFGGWAANSKYAVLGSLRTCAQMISYEIPMGFAVIGVVMLAQSMSLLDIVRAQTDVWNVVYQPIGFFVFFVAGLAEAQRIPFDLAEAEGDLGAGFHTEYSGIRFALFMVSEYVVMVLVSVLTVILFFGGWNGVLIPLPPLLWFLLKVAFFVYLFMWFRFTFPRYRYDQLMAIGWKVLLPLSLANIIISGVVFS.

8 consecutive transmembrane segments (helical) span residues 3–23, 77–97, 119–139, 165–185, 191–211, 250–270, 272–292, and 307–327; these read LIVALGVIVFKVALVIAILLL, FLFKLAPILALAPPFVVFAAI, VALLFVFAVIGLEVYGVIFGG, MGFAVIGVVMLAQSMSLLDIV, VWNVVYQPIGFFVFFVAGLAE, MVLVSVLTVILFFGGWNGVLI, LPPLLWFLLKVAFFVYLFMWF, and IGWKVLLPLSLANIIISGVVF.

This sequence belongs to the complex I subunit 1 family. As to quaternary structure, NDH-1 is composed of 14 different subunits. Subunits NuoA, H, J, K, L, M, N constitute the membrane sector of the complex.

It is found in the cell inner membrane. It carries out the reaction a quinone + NADH + 5 H(+)(in) = a quinol + NAD(+) + 4 H(+)(out). Its function is as follows. NDH-1 shuttles electrons from NADH, via FMN and iron-sulfur (Fe-S) centers, to quinones in the respiratory chain. The immediate electron acceptor for the enzyme in this species is believed to be ubiquinone. Couples the redox reaction to proton translocation (for every two electrons transferred, four hydrogen ions are translocated across the cytoplasmic membrane), and thus conserves the redox energy in a proton gradient. This subunit may bind ubiquinone. The chain is NADH-quinone oxidoreductase subunit H 2 from Rhizobium meliloti (strain 1021) (Ensifer meliloti).